A 33-amino-acid polypeptide reads, in one-letter code: Dermonecrotic toxin LiSicTox-alphaI-1 (33 aa).

Glutamate 32 contributes to the Mg(2+) binding site.

The protein belongs to the arthropod phospholipase D family. Class II subfamily. Mg(2+) is required as a cofactor. In terms of processing, contains 2 disulfide bonds. Expressed by the venom gland.

The protein resides in the secreted. It catalyses the reaction an N-(acyl)-sphingosylphosphocholine = an N-(acyl)-sphingosyl-1,3-cyclic phosphate + choline. It carries out the reaction an N-(acyl)-sphingosylphosphoethanolamine = an N-(acyl)-sphingosyl-1,3-cyclic phosphate + ethanolamine. The enzyme catalyses a 1-acyl-sn-glycero-3-phosphocholine = a 1-acyl-sn-glycero-2,3-cyclic phosphate + choline. The catalysed reaction is a 1-acyl-sn-glycero-3-phosphoethanolamine = a 1-acyl-sn-glycero-2,3-cyclic phosphate + ethanolamine. Its function is as follows. Dermonecrotic toxins cleave the phosphodiester linkage between the phosphate and headgroup of certain phospholipids (sphingolipid and lysolipid substrates), forming an alcohol (often choline) and a cyclic phosphate. This toxin acts on sphingomyelin (SM). It may also act on ceramide phosphoethanolamine (CPE), lysophosphatidylcholine (LPC) and lysophosphatidylethanolamine (LPE), but not on lysophosphatidylserine (LPS), and lysophosphatidylglycerol (LPG). It acts by transphosphatidylation, releasing exclusively cyclic phosphate products as second products. In vivo, intradermal injection induces dermonecrosis. Induces hemolysis, increased vascular permeability, edema, inflammatory response, and platelet aggregation. This chain is Dermonecrotic toxin LiSicTox-alphaI-1, found in Loxosceles intermedia (Brown spider).